The primary structure comprises 515 residues: Synaptic vesicular amine transporter (515 aa).

Residues 1–20 (MALSDLVLLRWLRDSRHSRK) are Cytoplasmic-facing. The helical transmembrane segment at 21–41 (LILFIVFLALLLDNMLLTVVV) threads the bilayer. Residues 42–130 (PIIPSYLYSI…EDRDLLNENV (89 aa)) are Lumenal, vesicle-facing. 5 N-linked (GlcNAc...) asparagine glycosylation sites follow: Asn56, Asn80, Asn81, Asn89, and Asn111. A disulfide bridge links Cys118 with Cys325. The helical transmembrane segment at 131-151 (QVGLLFASKATVQLLTNPFIG) threads the bilayer. Residues 152–160 (LLTNRIGYP) lie on the Cytoplasmic side of the membrane. The helical transmembrane segment at 161–181 (IPMFAGFCIMFISTVMFAFSS) threads the bilayer. The Lumenal, vesicle segment spans residues 182–190 (SYAFLLIAR). Residues 191 to 211 (SLQGIGSSCSSVAGMGMLASV) form a helical membrane-spanning segment. Over 212-220 (YTDDEERGK) the chain is Cytoplasmic. A helical transmembrane segment spans residues 221–243 (PMGIALGGLAMGVLVGPPFGSVL). Residues Leu229 and Val233 each coordinate serotonin. The Lumenal, vesicle portion of the chain corresponds to 244–249 (YEFVGK). Residues 250 to 272 (TAPFLVLAALVLLDGAIQLFVLQ) traverse the membrane as a helical segment. Residues 273–292 (PSRVQPESQKGTPLTTLLKD) lie on the Cytoplasmic side of the membrane. A helical membrane pass occupies residues 293–312 (PYILIAAGSICFANMGIAML). The serotonin site is built by Asn306, Ile309, Glu313, Phe335, and Tyr342. Topologically, residues 313 to 329 (EPALPIWMMETMCSRKW) are lumenal, vesicle. The helical transmembrane segment at 330–353 (QLGVAFLPASISYLIGTNIFGILA) threads the bilayer. The Cytoplasmic segment spans residues 354–358 (HKMGR). The helical transmembrane segment at 359–379 (WLCALLGMVIVGISILCIPFA) threads the bilayer. The Lumenal, vesicle segment spans residues 380-390 (KNIYGLIAPNF). Residues 391–411 (GVGFAIGMVDSSMMPIMGYLV) form a helical membrane-spanning segment. Asp400 contacts serotonin. The Cytoplasmic portion of the chain corresponds to 412–415 (DLRH). The chain crosses the membrane as a helical span at residues 416–436 (VSVYGSVYAIADVAFCMGYAI). Tyr434 lines the serotonin pocket. The Lumenal, vesicle portion of the chain corresponds to 437 to 441 (GPSAG). A helical transmembrane segment spans residues 442–463 (GAIAKAIGFPWLMTIIGIIDIA). Residues 464 to 515 (FAPLCFFLRSPPAKEEKMAILMDHNCPIKRKMYTQNNVQSYPIGDDEESESD) are Cytoplasmic-facing. Residues Ser512 and Ser514 each carry the phosphoserine; by CK2 modification.

It belongs to the major facilitator superfamily. Vesicular transporter family. As to quaternary structure, interacts with SLC6A3. In terms of tissue distribution, expressed in the substantia nigra and the tuberomammillary nucleus of the posterior hypothalamus. Expressed in stomach, in particular in varicose nerve fibers and enterochromaffin-like cells in the corpus region (at protein level).

The protein resides in the cytoplasmic vesicle. It localises to the secretory vesicle. It is found in the synaptic vesicle membrane. Its subcellular location is the secretory vesicle membrane. The protein localises to the cell projection. The protein resides in the axon. It localises to the dendrite. The catalysed reaction is serotonin(in) + 2 H(+)(out) = serotonin(out) + 2 H(+)(in). The enzyme catalyses dopamine(in) + 2 H(+)(out) = dopamine(out) + 2 H(+)(in). It catalyses the reaction histamine(in) + 2 H(+)(out) = histamine(out) + 2 H(+)(in). Strongly inhibited by reserpine and tetrabenazine. Also inhibited to a lesser extent by ketanserin and fenfluramine. Reserpine and ketanserin inhibit by blocking the substrate-binding pocket. Tetrabenazine traps SLC18A2/VMAT2 in an occluded conformation and its inhibition is specific to SLC18A2/VMAT2 but not SLC18A1/VMAT1. Electrogenic antiporter that exchanges one cationic monoamine with two intravesicular protons across the membrane of secretory and synaptic vesicles. Uses the electrochemical proton gradient established by the V-type proton-pump ATPase to accumulate high concentrations of monoamines inside the vesicles prior to their release via exocytosis. Transports a variety of catecholamines such as dopamine, adrenaline and noradrenaline, histamine, and indolamines such as serotonin. Regulates the transvesicular monoaminergic gradient that determines the quantal size. Mediates somatodendritic dopamine release in hippocampal neurons, likely as part of a regulated secretory pathway that integrates retrograde synaptic signals. Acts as a primary transporter for striatal dopamine loading ensuring impulse-dependent release of dopamine at the synaptic cleft. Responsible for histamine and serotonin storage and subsequent corelease from mast cell granules. The polypeptide is Synaptic vesicular amine transporter (Slc18a2) (Rattus norvegicus (Rat)).